A 154-amino-acid polypeptide reads, in one-letter code: SsrA-binding protein (154 aa).

Belongs to the SmpB family.

The protein localises to the cytoplasm. Functionally, required for rescue of stalled ribosomes mediated by trans-translation. Binds to transfer-messenger RNA (tmRNA), required for stable association of tmRNA with ribosomes. tmRNA and SmpB together mimic tRNA shape, replacing the anticodon stem-loop with SmpB. tmRNA is encoded by the ssrA gene; the 2 termini fold to resemble tRNA(Ala) and it encodes a 'tag peptide', a short internal open reading frame. During trans-translation Ala-aminoacylated tmRNA acts like a tRNA, entering the A-site of stalled ribosomes, displacing the stalled mRNA. The ribosome then switches to translate the ORF on the tmRNA; the nascent peptide is terminated with the 'tag peptide' encoded by the tmRNA and targeted for degradation. The ribosome is freed to recommence translation, which seems to be the essential function of trans-translation. The chain is SsrA-binding protein from Acetivibrio thermocellus (strain ATCC 27405 / DSM 1237 / JCM 9322 / NBRC 103400 / NCIMB 10682 / NRRL B-4536 / VPI 7372) (Clostridium thermocellum).